The chain runs to 535 residues: Nuclear/nucleolar GTPase 2 (535 aa).

The interval 1 to 42 (MAKKKERAVNVSGKPRHSLDVNRANDKKGAGGGAGGGGGGRS) is disordered. A compositionally biased stretch (basic and acidic residues) spans 17 to 29 (HSLDVNRANDKKG). Residues 30-41 (AGGGAGGGGGGR) show a composition bias toward gly residues. One can recognise a CP-type G domain in the interval 213–374 (WGELYKVIDS…LIDCPGVVYQ (162 aa)). Residues 261 to 264 (NKCD) form a G4 region. Residues 290–292 (SIN) are G5. The tract at residues 323-330 (GYPNVGKS) is G1. The tract at residues 349-353 (GETKV) is G2. A G3 region spans residues 367–370 (DCPG). The interval 464-494 (FFVPPPQQGEDSPSETAEPVEKSDEEGVSSD) is disordered.

This sequence belongs to the TRAFAC class YlqF/YawG GTPase family. RsgA subfamily. As to quaternary structure, interacts (via N-terminus) with the 60S ribosomal proteins RPL10A. This interaction is enhanced by the addition of GTP. As to expression, expressed in roots, shoot apical meristem, leaves, leaf sheaths and flowers.

It is found in the nucleus. Its subcellular location is the nucleolus. With respect to regulation, the GTPase activity is stimulated in the presence of ribosomes, particularly of the 60S subunit. In terms of biological role, GTPase involved in pre-60S ribosomal subunit maturation. This Oryza sativa subsp. japonica (Rice) protein is Nuclear/nucleolar GTPase 2.